The primary structure comprises 254 residues: Protein CbbY, plasmid (254 aa).

It belongs to the HAD-like hydrolase superfamily. CbbY/CbbZ/Gph/YieH family.

This is Protein CbbY, plasmid (cbbYP) from Cupriavidus necator (strain ATCC 17699 / DSM 428 / KCTC 22496 / NCIMB 10442 / H16 / Stanier 337) (Ralstonia eutropha).